Consider the following 53-residue polypeptide: UPF0391 membrane protein ECA0470 (53 aa).

The next 2 helical transmembrane spans lie at 4-24 and 30-47; these read WGII…GGLA and AAKI…VSLF.

Belongs to the UPF0391 family.

The protein resides in the cell membrane. This chain is UPF0391 membrane protein ECA0470, found in Pectobacterium atrosepticum (strain SCRI 1043 / ATCC BAA-672) (Erwinia carotovora subsp. atroseptica).